The chain runs to 334 residues: Protein-glutamate methylesterase FrzG (334 aa).

The 188-residue stretch at 147–334 (PYPLVAIAAS…AALMQWVDVC (188 aa)) folds into the CheB-type methylesterase domain. Residues serine 156, histidine 183, and aspartate 276 contribute to the active site.

The catalysed reaction is [protein]-L-glutamate 5-O-methyl ester + H2O = L-glutamyl-[protein] + methanol + H(+). Probable methylesterase. Required for the normal aggregation of M.xanthus cells during fruiting body formation. It is also a component of a sensory transduction pathway that controls the frequency at which cells reverse their gliding direction. It may remove the methyl group from the gamma-glutamyl methyl ester residues in FrzCD. This Myxococcus xanthus protein is Protein-glutamate methylesterase FrzG (frzG).